The chain runs to 36 residues: Toxin Iob1 (36 aa).

3 disulfide bridges follow: Cys-6/Cys-21, Cys-13/Cys-26, and Cys-20/Cys-33.

The protein localises to the secreted. Its function is as follows. Binds reversibly and blocks N-type voltage-gated calcium channels (Cav). This chain is Toxin Iob1, found in Isyndus obscurus (Assassin bug).